A 354-amino-acid polypeptide reads, in one-letter code: UDP-N-acetylglucosamine--N-acetylmuramyl-(pentapeptide) pyrophosphoryl-undecaprenol N-acetylglucosamine transferase (354 aa).

UDP-N-acetyl-alpha-D-glucosamine-binding positions include 15–17 (TGG), asparagine 127, arginine 163, serine 191, isoleucine 244, 263–268 (ALTVSE), and glutamine 288.

This sequence belongs to the glycosyltransferase 28 family. MurG subfamily.

It localises to the cell inner membrane. The enzyme catalyses di-trans,octa-cis-undecaprenyl diphospho-N-acetyl-alpha-D-muramoyl-L-alanyl-D-glutamyl-meso-2,6-diaminopimeloyl-D-alanyl-D-alanine + UDP-N-acetyl-alpha-D-glucosamine = di-trans,octa-cis-undecaprenyl diphospho-[N-acetyl-alpha-D-glucosaminyl-(1-&gt;4)]-N-acetyl-alpha-D-muramoyl-L-alanyl-D-glutamyl-meso-2,6-diaminopimeloyl-D-alanyl-D-alanine + UDP + H(+). It functions in the pathway cell wall biogenesis; peptidoglycan biosynthesis. Its function is as follows. Cell wall formation. Catalyzes the transfer of a GlcNAc subunit on undecaprenyl-pyrophosphoryl-MurNAc-pentapeptide (lipid intermediate I) to form undecaprenyl-pyrophosphoryl-MurNAc-(pentapeptide)GlcNAc (lipid intermediate II). The polypeptide is UDP-N-acetylglucosamine--N-acetylmuramyl-(pentapeptide) pyrophosphoryl-undecaprenol N-acetylglucosamine transferase (Aliivibrio fischeri (strain MJ11) (Vibrio fischeri)).